The sequence spans 372 residues: Glutamate 5-kinase (372 aa).

Lysine 14 is a binding site for ATP. Substrate-binding residues include serine 54, aspartate 141, and asparagine 153. ATP is bound at residue 173–174 (TD). Residues 280-358 (RGHVVIDAGA…GEIEAVLGYM (79 aa)) enclose the PUA domain.

Belongs to the glutamate 5-kinase family.

The protein localises to the cytoplasm. The catalysed reaction is L-glutamate + ATP = L-glutamyl 5-phosphate + ADP. It participates in amino-acid biosynthesis; L-proline biosynthesis; L-glutamate 5-semialdehyde from L-glutamate: step 1/2. In terms of biological role, catalyzes the transfer of a phosphate group to glutamate to form L-glutamate 5-phosphate. This is Glutamate 5-kinase from Burkholderia thailandensis (strain ATCC 700388 / DSM 13276 / CCUG 48851 / CIP 106301 / E264).